We begin with the raw amino-acid sequence, 146 residues long: MORN repeat-containing protein 4 (146 aa).

MORN repeat units follow at residues 16-38 (YRGE…DGGT), 39-61 (YLGH…DGSR), 62-84 (YEGE…DNMT), and 85-107 (FEGE…DGSH).

In terms of assembly, interacts with MYO3A.

The protein resides in the cytoplasm. It is found in the cell projection. The protein localises to the filopodium tip. Its subcellular location is the stereocilium. Functionally, plays a role in promoting axonal degeneration following neuronal injury by toxic insult or trauma. In Rattus norvegicus (Rat), this protein is MORN repeat-containing protein 4 (Morn4).